We begin with the raw amino-acid sequence, 1226 residues long: Methionine synthase (1226 aa).

The region spanning 6–326 (RAQIEAQLKQ…EHIRHMAMAV (321 aa)) is the Hcy-binding domain. Zn(2+)-binding residues include C248, C311, and C312. The 262-residue stretch at 357 to 618 (FVNVGERTNV…VPEKLREAVE (262 aa)) folds into the Pterin-binding domain. Residues 651–745 (SALEWRTWSV…FINASKQVGS (95 aa)) enclose the B12-binding N-terminal domain. Methylcob(III)alamin contacts are provided by residues E695, 757-761 (GDVHD), H760, S805, T809, and A861. A B12-binding domain is found at 747-882 (NGKILLATVK…SDELRPAFVE (136 aa)). In terms of domain architecture, AdoMet activation spans 898-1226 (KKPRTKPVTL…EKWLGPNING (329 aa)). S-adenosyl-L-methionine is bound by residues D948, R1136, and 1191–1192 (YF).

This sequence belongs to the vitamin-B12 dependent methionine synthase family. It depends on methylcob(III)alamin as a cofactor. Requires Zn(2+) as cofactor.

The enzyme catalyses (6S)-5-methyl-5,6,7,8-tetrahydrofolate + L-homocysteine = (6S)-5,6,7,8-tetrahydrofolate + L-methionine. The protein operates within amino-acid biosynthesis; L-methionine biosynthesis via de novo pathway; L-methionine from L-homocysteine (MetH route): step 1/1. In terms of biological role, catalyzes the transfer of a methyl group from methyl-cobalamin to homocysteine, yielding enzyme-bound cob(I)alamin and methionine. Subsequently, remethylates the cofactor using methyltetrahydrofolate. The polypeptide is Methionine synthase (metH) (Vibrio vulnificus (strain YJ016)).